Reading from the N-terminus, the 204-residue chain is Large ribosomal subunit protein uL4 (204 aa).

The segment at 47–69 (KAQKTRAEVSGGGKKPWRQKGTG) is disordered.

Belongs to the universal ribosomal protein uL4 family. In terms of assembly, part of the 50S ribosomal subunit.

One of the primary rRNA binding proteins, this protein initially binds near the 5'-end of the 23S rRNA. It is important during the early stages of 50S assembly. It makes multiple contacts with different domains of the 23S rRNA in the assembled 50S subunit and ribosome. Its function is as follows. Forms part of the polypeptide exit tunnel. This Cellvibrio japonicus (strain Ueda107) (Pseudomonas fluorescens subsp. cellulosa) protein is Large ribosomal subunit protein uL4.